Here is a 1063-residue protein sequence, read N- to C-terminus: Cobalt-zinc-cadmium resistance protein CzcA (1063 aa).

The next 12 membrane-spanning stretches (helical) occupy residues 14 to 34 (WLVLLAVFGMAGLGIFSYNRL), 350 to 370 (GAVLVIVILFLFLGNIRAALI), 371 to 391 (TATIIPLAMLFTFTGMVNYKI), 395 to 415 (LMSLGALDFGIIIDGAVVIVE), 452 to 472 (LIFGQLIIMIVYLPIFALTGV), 487 to 507 (ALLGAMILSVTFVPAAVALFI), 534 to 554 (LANTAVVLTFAAVSIVLCVAI), 883 to 903 (VVVPVALLLVFVLLFAMFNNI), 906 to 926 (GLLVFTGIPFALTGGILALWI), 937 to 957 (VGFIALCGVAVLNGLVMLSFI), 981 to 1001 (PVLMTALVASLGFVPMAIATG), and 1013 to 1033 (VVIGGILSSTALTLLVLPVLY). Residues 1040-1063 (DEDAEDTREPVTQTHQPDQGRQPA) are disordered. Residues 1049–1063 (PVTQTHQPDQGRQPA) are compositionally biased toward polar residues.

It belongs to the resistance-nodulation-cell division (RND) (TC 2.A.6) family.

Its subcellular location is the cell inner membrane. Functionally, has a low cation transport activity for cobalt, it is essential for the expression of cobalt, zinc, and cadmium resistance. CzcA and CzcB together would act in zinc efflux nearly as effectively as the complete CZC efflux system (CzcABC). The polypeptide is Cobalt-zinc-cadmium resistance protein CzcA (czcA) (Cupriavidus metallidurans (strain ATCC 43123 / DSM 2839 / NBRC 102507 / CH34) (Ralstonia metallidurans)).